A 233-amino-acid chain; its full sequence is NAD-dependent protein deacylase (233 aa).

In terms of domain architecture, Deacetylase sirtuin-type spans 1–230 (MKNIMILSGA…ALDIENFMKD (230 aa)). 9-28 (GAGLSAPSGLKTFRDNDGLW) provides a ligand contact to NAD(+). Substrate is bound by residues Tyr-53 and Arg-56. NAD(+) is bound at residue 88–91 (QNVD). Catalysis depends on His-106, which acts as the Proton acceptor. Residues Cys-114, Cys-117, Cys-133, and Cys-136 each coordinate Zn(2+). NAD(+) is bound by residues 172–174 (GTS) and Ile-213.

Belongs to the sirtuin family. Class III subfamily. It depends on Zn(2+) as a cofactor.

It is found in the cytoplasm. The enzyme catalyses N(6)-acetyl-L-lysyl-[protein] + NAD(+) + H2O = 2''-O-acetyl-ADP-D-ribose + nicotinamide + L-lysyl-[protein]. It catalyses the reaction N(6)-succinyl-L-lysyl-[protein] + NAD(+) + H2O = 2''-O-succinyl-ADP-D-ribose + nicotinamide + L-lysyl-[protein]. In terms of biological role, NAD-dependent lysine deacetylase and desuccinylase that specifically removes acetyl and succinyl groups on target proteins. Modulates the activities of several proteins which are inactive in their acylated form. The protein is NAD-dependent protein deacylase of Campylobacter jejuni (strain RM1221).